A 290-amino-acid polypeptide reads, in one-letter code: Ribosomal RNA small subunit methyltransferase A (290 aa).

N27, L29, G54, E75, D100, and N125 together coordinate S-adenosyl-L-methionine.

It belongs to the class I-like SAM-binding methyltransferase superfamily. rRNA adenine N(6)-methyltransferase family. RsmA subfamily.

The protein localises to the cytoplasm. It catalyses the reaction adenosine(1518)/adenosine(1519) in 16S rRNA + 4 S-adenosyl-L-methionine = N(6)-dimethyladenosine(1518)/N(6)-dimethyladenosine(1519) in 16S rRNA + 4 S-adenosyl-L-homocysteine + 4 H(+). Specifically dimethylates two adjacent adenosines (A1518 and A1519) in the loop of a conserved hairpin near the 3'-end of 16S rRNA in the 30S particle. May play a critical role in biogenesis of 30S subunits. The polypeptide is Ribosomal RNA small subunit methyltransferase A (Streptococcus agalactiae serotype V (strain ATCC BAA-611 / 2603 V/R)).